The following is a 582-amino-acid chain: Threonine--tRNA ligase (582 aa).

A catalytic region spans residues D185–P478. Zn(2+) contacts are provided by C278, H329, and H455.

Belongs to the class-II aminoacyl-tRNA synthetase family. In terms of assembly, homodimer. Requires Zn(2+) as cofactor.

Its subcellular location is the cytoplasm. It catalyses the reaction tRNA(Thr) + L-threonine + ATP = L-threonyl-tRNA(Thr) + AMP + diphosphate + H(+). Functionally, catalyzes the attachment of threonine to tRNA(Thr) in a two-step reaction: L-threonine is first activated by ATP to form Thr-AMP and then transferred to the acceptor end of tRNA(Thr). Also edits incorrectly charged L-seryl-tRNA(Thr). The polypeptide is Threonine--tRNA ligase (Dehalococcoides mccartyi (strain ATCC BAA-2100 / JCM 16839 / KCTC 5957 / BAV1)).